Here is a 329-residue protein sequence, read N- to C-terminus: MCSRILLSGLVGLGAGTGLTYLLLNKHSPTQIIETPYPPTQKPNSNIQSHSFNVDPSGFFKYGFPGPIHDLQNREEFISCYNRQTQNPYWVLEHITPESLAARNADRKNSFFKEDEVIPEKFRGKLRDYFRSGYDRGHQAPAADAKFSQQAMDDTFYLSNMCPQVGEGFNRDYWAHLEYFCRGLTKKYKSVRIVTGPLYLPKKDPIDNKFRVNYEVIGNPPSIAVPTHFFKLIVAEAPTANPAREDIAVAAFVLPNEPISNETKLTDFEVPIDALERSTGLELLQKVPPSKKKALCKEVNCQIVVRDFSNAAIKQSKDVKLLPPPKKRN.

His-138 serves as the catalytic Proton acceptor. Asn-170 provides a ligand contact to Mg(2+).

The protein belongs to the DNA/RNA non-specific endonuclease family. In terms of assembly, homodimer. It depends on Mn(2+) as a cofactor. Mg(2+) is required as a cofactor.

The protein localises to the mitochondrion inner membrane. In terms of biological role, this enzyme has both RNase and DNase activity. This chain is Mitochondrial nuclease (NUC1), found in Saccharomyces cerevisiae (strain ATCC 204508 / S288c) (Baker's yeast).